Reading from the N-terminus, the 433-residue chain is Serine/threonine-protein kinase Sgk1 (433 aa).

The interval 66-92 is disordered; the sequence is QDVELMNSNPSPPPSPSQQINLGPSSN. A compositionally biased stretch (polar residues) spans 83 to 92; that stretch reads QQINLGPSSN. The 258-residue stretch at 100–357 folds into the Protein kinase domain; it reads FDFLKVIGKG…FTEIKNHMFF (258 aa). ATP contacts are provided by residues 106-114 and Lys-129; that span reads IGKGSFGKV. Residue Asp-224 is the Proton acceptor of the active site. Residues 358-433 enclose the AGC-kinase C-terminal domain; sequence SPINWDDLNA…SYAPAMDSYL (76 aa).

Belongs to the protein kinase superfamily. AGC Ser/Thr protein kinase family.

The protein resides in the cytoplasm. Its subcellular location is the nucleus. It is found in the endoplasmic reticulum. The catalysed reaction is L-seryl-[protein] + ATP = O-phospho-L-seryl-[protein] + ADP + H(+). The enzyme catalyses L-threonyl-[protein] + ATP = O-phospho-L-threonyl-[protein] + ADP + H(+). Its function is as follows. Protein kinase that may play an important role in cellular stress response. May be involved in the regulation of processes such as cell survival, neuronal excitability and renal sodium excretion. This Danio rerio (Zebrafish) protein is Serine/threonine-protein kinase Sgk1 (sgk1).